A 64-amino-acid chain; its full sequence is Translational regulator CsrA (64 aa).

This sequence belongs to the CsrA/RsmA family. Homodimer; the beta-strands of each monomer intercalate to form a hydrophobic core, while the alpha-helices form wings that extend away from the core.

The protein resides in the cytoplasm. A key translational regulator that binds mRNA to regulate translation initiation and/or mRNA stability. Mediates global changes in gene expression, shifting from rapid growth to stress survival by linking envelope stress, the stringent response and the catabolite repression systems. Usually binds in the 5'-UTR; binding at or near the Shine-Dalgarno sequence prevents ribosome-binding, repressing translation, binding elsewhere in the 5'-UTR can activate translation and/or stabilize the mRNA. Its function is antagonized by small RNA(s). This is Translational regulator CsrA from Actinobacillus pleuropneumoniae serotype 5b (strain L20).